A 344-amino-acid chain; its full sequence is Dihydroorotate dehydrogenase (quinone) (344 aa).

Residues 65–69 and threonine 89 contribute to the FMN site; that span reads AGLDK. Lysine 69 lines the substrate pocket. 114-118 is a substrate binding site; sequence NRMGF. Residues asparagine 145 and asparagine 178 each contribute to the FMN site. Substrate is bound at residue asparagine 178. The active-site Nucleophile is the serine 181. Asparagine 183 contributes to the substrate binding site. FMN-binding residues include lysine 223 and threonine 251. Position 252-253 (252-253) interacts with substrate; that stretch reads NT. FMN is bound by residues glycine 274, glycine 303, and 324–325; that span reads YS.

Belongs to the dihydroorotate dehydrogenase family. Type 2 subfamily. In terms of assembly, monomer. The cofactor is FMN.

It is found in the cell membrane. The enzyme catalyses (S)-dihydroorotate + a quinone = orotate + a quinol. It functions in the pathway pyrimidine metabolism; UMP biosynthesis via de novo pathway; orotate from (S)-dihydroorotate (quinone route): step 1/1. Catalyzes the conversion of dihydroorotate to orotate with quinone as electron acceptor. In Cupriavidus taiwanensis (strain DSM 17343 / BCRC 17206 / CCUG 44338 / CIP 107171 / LMG 19424 / R1) (Ralstonia taiwanensis (strain LMG 19424)), this protein is Dihydroorotate dehydrogenase (quinone).